The chain runs to 347 residues: GMP reductase (347 aa).

108–131 (TDFIKLSEILAKSEDLNFICIDIA) lines the NADP(+) pocket. 2 residues coordinate K(+): G181 and G183. Catalysis depends on C186, which acts as the Thioimidate intermediate. 216–239 (IIGDGGCSCAGDVAKAFGGGADFV) serves as a coordination point for NADP(+).

This sequence belongs to the IMPDH/GMPR family. GuaC type 1 subfamily. Homotetramer.

The catalysed reaction is IMP + NH4(+) + NADP(+) = GMP + NADPH + 2 H(+). Functionally, catalyzes the irreversible NADPH-dependent deamination of GMP to IMP. It functions in the conversion of nucleobase, nucleoside and nucleotide derivatives of G to A nucleotides, and in maintaining the intracellular balance of A and G nucleotides. In Shewanella pealeana (strain ATCC 700345 / ANG-SQ1), this protein is GMP reductase.